The sequence spans 275 residues: MALVKLKPTSAGRRAMVKVVNADLYKGRPHAALVEKQSKNAGRNNSGRITVRHQGGGHKQHYRLVDFRRNKDGIAARVERVEYDPNRSANIALICYADGERAYIIAPKGLEVGQTVLSGPEAPIKAGNVLPIRNIPVGSTIHCVELMPGKGAQIARAAGTSVQLLAREGAYAQLRLRSGEVRRVHVECRAAIGVVGNEEHGLRKIGKAGANRWRGIRPTVRGVAMNPVDHPHGGGEGRTGEGGVARSPWGQPAKGYRTRSNKRTDTMIVQRRHKR.

Disordered stretches follow at residues 36–55 (KQSK…RHQG) and 223–275 (VAMN…RHKR). The segment covering 39–48 (KNAGRNNSGR) has biased composition (polar residues). A compositionally biased stretch (basic and acidic residues) spans 229–239 (DHPHGGGEGRT).

This sequence belongs to the universal ribosomal protein uL2 family. Part of the 50S ribosomal subunit. Forms a bridge to the 30S subunit in the 70S ribosome.

Its function is as follows. One of the primary rRNA binding proteins. Required for association of the 30S and 50S subunits to form the 70S ribosome, for tRNA binding and peptide bond formation. It has been suggested to have peptidyltransferase activity; this is somewhat controversial. Makes several contacts with the 16S rRNA in the 70S ribosome. The sequence is that of Large ribosomal subunit protein uL2 from Aromatoleum aromaticum (strain DSM 19018 / LMG 30748 / EbN1) (Azoarcus sp. (strain EbN1)).